Consider the following 115-residue polypeptide: Kunitz-type trypsin inhibitor 1 (115 aa).

This sequence belongs to the protease inhibitor I3 (leguminous Kunitz-type inhibitor) family.

In terms of biological role, exhibits Kunitz trypsin protease inhibitor activity. This Selenicereus undatus (Pitahaya) protein is Kunitz-type trypsin inhibitor 1.